Reading from the N-terminus, the 213-residue chain is Ripening-related protein 3 (213 aa).

A signal peptide spans 1-32 (MAGAMTMSRRRLSHALLLVLAILPNLAALAVA).

It belongs to the kiwellin family.

The protein resides in the secreted. The protein is Ripening-related protein 3 of Oryza sativa subsp. japonica (Rice).